The following is a 352-amino-acid chain: Phenylalanine--tRNA ligase alpha subunit (352 aa).

Residue glutamate 258 participates in Mg(2+) binding.

Belongs to the class-II aminoacyl-tRNA synthetase family. Phe-tRNA synthetase alpha subunit type 1 subfamily. In terms of assembly, tetramer of two alpha and two beta subunits. Mg(2+) is required as a cofactor.

It is found in the cytoplasm. The catalysed reaction is tRNA(Phe) + L-phenylalanine + ATP = L-phenylalanyl-tRNA(Phe) + AMP + diphosphate + H(+). In Staphylococcus aureus (strain NCTC 8325 / PS 47), this protein is Phenylalanine--tRNA ligase alpha subunit.